The chain runs to 751 residues: Palmitoyltransferase ZDHHC8B (751 aa).

The Cytoplasmic segment spans residues 1 to 13 (MPNSVGKRFKPTK). The helical transmembrane segment at 14-34 (YIPVSTAATLLVGSTTLFFVF) threads the bilayer. Over 35–41 (TCPWLTK) the chain is Extracellular. The helical transmembrane segment at 42 to 62 (AVSPVVPLYNGIVFLFVLANF) threads the bilayer. At 63–148 (SMATFMDPGV…NCIGRRNYRY (86 aa)) the chain is on the cytoplasmic side. Positions 104–154 (KWCATCHFYRPPRCSHCSVCDNCVEEFDHHCPWVNNCIGRRNYRYFFLFLL) constitute a DHHC domain. Residue C134 is the S-palmitoyl cysteine intermediate of the active site. A helical membrane pass occupies residues 149–169 (FFLFLLSLSVHMVGVFSFGLL). Over 170–185 (FVLHHLETLSALHTTV) the chain is Extracellular. A helical membrane pass occupies residues 186-206 (TLVVMCVTGLFFIPVMGLTGF). Residues 207-751 (HMVLVARGRT…VGGTTYEISV (545 aa)) lie on the Cytoplasmic side of the membrane. 5 disordered regions span residues 293 to 346 (RSKS…PSTP), 437 to 461 (CTPLGGTKHETITSTPHRGVFSPGT), 633 to 659 (RSSASSLVRAPRTSTTSLHTDGGGMNR), 666 to 685 (RSPVHQSHQSPTSVPRSPSY), and 703 to 736 (HLGTREDIGQGKVNGQLKGQYGTPSGTPSRHTSV). A compositionally biased stretch (low complexity) spans 326–338 (SQLTSSEESSLSS). Polar residues-rich tracts occupy residues 633 to 651 (RSSASSLVRAPRTSTTSLH), 669 to 681 (VHQSHQSPTSVPR), and 724 to 733 (GTPSGTPSRH).

This sequence belongs to the DHHC palmitoyltransferase family. ERF2/ZDHHC9 subfamily.

It localises to the golgi apparatus membrane. The protein localises to the mitochondrion membrane. It carries out the reaction L-cysteinyl-[protein] + hexadecanoyl-CoA = S-hexadecanoyl-L-cysteinyl-[protein] + CoA. In terms of biological role, palmitoyltransferase that catalyzes the addition of palmitate onto various protein substrates and therefore function in several unrelated biological processes. The polypeptide is Palmitoyltransferase ZDHHC8B (Danio rerio (Zebrafish)).